We begin with the raw amino-acid sequence, 399 residues long: Elongation factor Tu (399 aa).

Residues 10–207 (KTHMNVGTIG…AVDSYFPDPV (198 aa)) form the tr-type G domain. Residues 19 to 26 (GHIDHGKT) are G1. Residue 19–26 (GHIDHGKT) participates in GTP binding. Thr-26 is a binding site for Mg(2+). The G2 stretch occupies residues 60 to 64 (GITIN). The G3 stretch occupies residues 81-84 (DCPG). GTP contacts are provided by residues 81-85 (DCPGH) and 136-139 (NKVD). The tract at residues 136–139 (NKVD) is G4. Residues 174-176 (SAL) form a G5 region.

It belongs to the TRAFAC class translation factor GTPase superfamily. Classic translation factor GTPase family. EF-Tu/EF-1A subfamily. Monomer.

The protein resides in the cytoplasm. It catalyses the reaction GTP + H2O = GDP + phosphate + H(+). Functionally, GTP hydrolase that promotes the GTP-dependent binding of aminoacyl-tRNA to the A-site of ribosomes during protein biosynthesis. This is Elongation factor Tu from Petrotoga mobilis (strain DSM 10674 / SJ95).